The sequence spans 221 residues: CASP-like protein 2U10 (221 aa).

The segment at 1 to 22 is disordered; that stretch reads MDSSSKPMNGSAGGSPVGDERK. Over 1–31 the chain is Cytoplasmic; the sequence is MDSSSKPMNGSAGGSPVGDERKMGDHEHEFR. The chain crosses the membrane as a helical span at residues 32-52; sequence ISIILLRSFLLVLVIISEALM. The Extracellular portion of the chain corresponds to 53-91; the sequence is VTDRETGSVPLPFFGLPRPVFVTKTAKYELVTGLKFYVD. The chain crosses the membrane as a helical span at residues 92–112; that stretch reads ALGVVIGYTVLHLLFNIGLVA. Over 113-122 the chain is Cytoplasmic; the sequence is TKGTVVDCKS. Residues 123–143 traverse the membrane as a helical segment; that stretch reads VAWISFIADSMMGYLLLSSAA. The Extracellular segment spans residues 144 to 174; it reads VATEIGYLAEEGAPAVLWRKVCNAFGYFCTV. A helical transmembrane segment spans residues 175–195; it reads YAISVVICFIAALVSFVVVGI. The Cytoplasmic portion of the chain corresponds to 196–221; sequence SAYHLFRLYGIQQQAAREKEKLSAEM.

It belongs to the Casparian strip membrane proteins (CASP) family. As to quaternary structure, homodimer and heterodimers.

Its subcellular location is the cell membrane. The protein is CASP-like protein 2U10 of Selaginella moellendorffii (Spikemoss).